A 256-amino-acid chain; its full sequence is tRNA-cytidine(32) 2-sulfurtransferase (256 aa).

Positions 35–40 (SGGKDS) match the PP-loop motif motif. Positions 110, 113, and 201 each coordinate [4Fe-4S] cluster.

It belongs to the TtcA family. Homodimer. Mg(2+) serves as cofactor. It depends on [4Fe-4S] cluster as a cofactor.

It is found in the cytoplasm. The catalysed reaction is cytidine(32) in tRNA + S-sulfanyl-L-cysteinyl-[cysteine desulfurase] + AH2 + ATP = 2-thiocytidine(32) in tRNA + L-cysteinyl-[cysteine desulfurase] + A + AMP + diphosphate + H(+). Its pathway is tRNA modification. Catalyzes the ATP-dependent 2-thiolation of cytidine in position 32 of tRNA, to form 2-thiocytidine (s(2)C32). The sulfur atoms are provided by the cysteine/cysteine desulfurase (IscS) system. The polypeptide is tRNA-cytidine(32) 2-sulfurtransferase (Coxiella burnetii (strain RSA 493 / Nine Mile phase I)).